The primary structure comprises 291 residues: uncharacterized protein (291 aa).

To E.cuniculi ECU03_0120.

This is an uncharacterized protein from Encephalitozoon cuniculi (strain GB-M1) (Microsporidian parasite).